Reading from the N-terminus, the 289-residue chain is ATP synthase gamma chain (289 aa).

It belongs to the ATPase gamma chain family. As to quaternary structure, F-type ATPases have 2 components, CF(1) - the catalytic core - and CF(0) - the membrane proton channel. CF(1) has five subunits: alpha(3), beta(3), gamma(1), delta(1), epsilon(1). CF(0) has three main subunits: a, b and c.

It is found in the cell inner membrane. Produces ATP from ADP in the presence of a proton gradient across the membrane. The gamma chain is believed to be important in regulating ATPase activity and the flow of protons through the CF(0) complex. The sequence is that of ATP synthase gamma chain from Mannheimia succiniciproducens (strain KCTC 0769BP / MBEL55E).